The chain runs to 253 residues: Ubiquinone/menaquinone biosynthesis C-methyltransferase UbiE (253 aa).

Residues Thr-76, Asp-97, 125-126, and Ser-142 each bind S-adenosyl-L-methionine; that span reads NA.

It belongs to the class I-like SAM-binding methyltransferase superfamily. MenG/UbiE family.

The enzyme catalyses a 2-demethylmenaquinol + S-adenosyl-L-methionine = a menaquinol + S-adenosyl-L-homocysteine + H(+). The catalysed reaction is a 2-methoxy-6-(all-trans-polyprenyl)benzene-1,4-diol + S-adenosyl-L-methionine = a 5-methoxy-2-methyl-3-(all-trans-polyprenyl)benzene-1,4-diol + S-adenosyl-L-homocysteine + H(+). It functions in the pathway quinol/quinone metabolism; menaquinone biosynthesis; menaquinol from 1,4-dihydroxy-2-naphthoate: step 2/2. It participates in cofactor biosynthesis; ubiquinone biosynthesis. In terms of biological role, methyltransferase required for the conversion of demethylmenaquinol (DMKH2) to menaquinol (MKH2) and the conversion of 2-polyprenyl-6-methoxy-1,4-benzoquinol (DDMQH2) to 2-polyprenyl-3-methyl-6-methoxy-1,4-benzoquinol (DMQH2). The chain is Ubiquinone/menaquinone biosynthesis C-methyltransferase UbiE from Xylella fastidiosa (strain 9a5c).